Reading from the N-terminus, the 444-residue chain is Methylenetetrahydrofolate--tRNA-(uracil-5-)-methyltransferase TrmFO (444 aa).

FAD is bound at residue 10–15 (GAGLAG).

It belongs to the MnmG family. TrmFO subfamily. The cofactor is FAD.

Its subcellular location is the cytoplasm. It carries out the reaction uridine(54) in tRNA + (6R)-5,10-methylene-5,6,7,8-tetrahydrofolate + NADH + H(+) = 5-methyluridine(54) in tRNA + (6S)-5,6,7,8-tetrahydrofolate + NAD(+). It catalyses the reaction uridine(54) in tRNA + (6R)-5,10-methylene-5,6,7,8-tetrahydrofolate + NADPH + H(+) = 5-methyluridine(54) in tRNA + (6S)-5,6,7,8-tetrahydrofolate + NADP(+). Its function is as follows. Catalyzes the folate-dependent formation of 5-methyl-uridine at position 54 (M-5-U54) in all tRNAs. This Streptococcus uberis (strain ATCC BAA-854 / 0140J) protein is Methylenetetrahydrofolate--tRNA-(uracil-5-)-methyltransferase TrmFO.